Here is a 65-residue protein sequence, read N- to C-terminus: Large ribosomal subunit protein bL35c (65 aa).

It belongs to the bacterial ribosomal protein bL35 family.

The protein localises to the plastid. Its subcellular location is the cyanelle. In Cyanophora paradoxa, this protein is Large ribosomal subunit protein bL35c (rpl35).